The sequence spans 285 residues: MTTLTHRARRTEISKNSEKKMESEEDSNWEKSPDNEDSGDSKDIRLTLMEEVLLLGLKDKEGYTSFWNDCISSGLRGGILIELAMRGRIYLEPPTMRKKRLLDRKVLLKSDSPTGDVLLDETLKHIKATEPTETVQTWIELLTGETWNPFKLQYQLRNVRERIAKNLVEKGILTTEKQNFLLFDMTTHPVTNTTEKQRLVKKLQDSVLERWVNDPQRMDKRTLALLVLAHSSDVLENVFSSLTDDKYDVAMNRAKDLVELDPEVEGTKPSATEMIWAVLAAFNKS.

The interval 1–42 (MTTLTHRARRTEISKNSEKKMESEEDSNWEKSPDNEDSGDSK) is disordered. Residues 10 to 42 (RTEISKNSEKKMESEEDSNWEKSPDNEDSGDSK) show a composition bias toward basic and acidic residues. Positions 67 and 76 each coordinate a 1,2-diacyl-sn-glycero-3-phospho-(1D-myo-inositol 4-phosphate). A Phosphoserine modification is found at Ser-112. A 1,2-diacyl-sn-glycero-3-phospho-(1D-myo-inositol 4-phosphate) is bound by residues Arg-157 and Arg-160. The segment at 176 to 187 (EKQNFLLFDMTT) is beta-hairpin required for oligomerization.

Belongs to the GOLPH3/VPS74 family. Homooligomer. Does not interact MYO18; differs from GOLPH3 by its inability to interact with MYO18. May interact with ARF1.

The protein resides in the golgi apparatus. Its subcellular location is the golgi stack membrane. It localises to the trans-Golgi network membrane. Its function is as follows. Phosphatidylinositol-4-phosphate-binding protein that may antagonize the action of GOLPH3 which is required for the process of vesicle budding at the Golgi and anterograde transport to the plasma membrane. The chain is Golgi phosphoprotein 3-like (GOLPH3L) from Homo sapiens (Human).